Reading from the N-terminus, the 384-residue chain is Glucans biosynthesis protein C (384 aa).

A run of 10 helical transmembrane segments spans residues 17-37, 54-74, 91-111, 140-160, 173-193, 212-232, 240-260, 274-294, 311-331, and 338-358; these read AWLMLLGIPFHISLIYSTHSW, FIHAFRMQVFFVISGYFSYML, VGIPMLTAIPLLTLPQFILLQ, LWFLLVLVILTTVSIGIFTWF, AISLAKLSLIFFLLGVAYAAI, FIVMQTLFYVPFFILGALAFI, FTTPSRGCTLGAAVAFIAYLL, TESVITMVMGLWMVNVVFSLG, ASLFIYLVHHPLTLFFGAYIT, and LIGFLCGLIFVMGIALILYEI.

This sequence belongs to the acyltransferase 3 family. OpgC subfamily.

The protein localises to the cell membrane. It participates in glycan metabolism; osmoregulated periplasmic glucan (OPG) biosynthesis. In terms of biological role, necessary for the succinyl substitution of periplasmic glucans. Could catalyze the transfer of succinyl residues from the cytoplasmic side of the membrane to the nascent glucan backbones on the periplasmic side of the membrane. This chain is Glucans biosynthesis protein C, found in Salmonella typhimurium (strain LT2 / SGSC1412 / ATCC 700720).